The primary structure comprises 733 residues: SWR1-complex protein 4 (733 aa).

2 disordered regions span residues 1–34 (MTSHDVRDVLNLPSDHAGPRPSKKARTATPRPNL) and 98–128 (PDGTVQDGSAEGQDSAATADNSADKPEDSSF). Residues 146 to 217 (NTNLKHPDWT…DLKARYYEVA (72 aa)) enclose the SANT domain. Residues 247 to 299 (KQEQNRKRFAENTLKRSSDEAREEEALLLEIKRIMARTERFNEERRELYNRLD) are a coiled coil. Residues 371–384 (AASRRESLAASSTA) are compositionally biased toward low complexity. 2 disordered regions span residues 371–488 (AASR…GSGP) and 564–733 (KKAE…KQKK). 4 stretches are compositionally biased toward basic and acidic residues: residues 387 to 423 (NDHHEPPVREPPVRHERQESRSHHRNESRSERADRHG), 463 to 484 (PERRKLSEHEEQVYGVSHHDRL), 564 to 589 (KKAERERAAREAAEARGETVEKKGGE), and 610 to 653 (DDAK…KGEE). A compositionally biased stretch (low complexity) spans 699-710 (GSSSGAGASSGA).

The protein belongs to the SWC4 family. In terms of assembly, component of the SWR1 chromatin-remodeling complex and of the NuA4 histone acetyltransferase complex.

The protein resides in the nucleus. Component of the SWR1 complex which mediates the ATP-dependent exchange of histone H2A for the H2A variant H2A.Z leading to transcriptional regulation of selected genes by chromatin remodeling. Component of the NuA4 histone acetyltransferase complex which is involved in transcriptional activation of selected genes principally by acetylation of nucleosomal histone H4 and H2A. The NuA4 complex is also involved in DNA repair. The sequence is that of SWR1-complex protein 4 (crc-1) from Neurospora crassa (strain ATCC 24698 / 74-OR23-1A / CBS 708.71 / DSM 1257 / FGSC 987).